Consider the following 239-residue polypeptide: MSAASVSKVVVVFSGGQDSTTCLIQALTQFDEVHGITFDYGQRHREEIEVAKSLAKRLKITSHKVMDVSLLNELAISALTRDAIPVSHELMENGLPNTFVPGRNILFLTLAGIYAYQLGAEAIITGVCETDFSGYPDCRHDFVRAMESALVQGMDKKLEIITPLMWLNKAQTWALADKYQQLDLVRHHTLTCYNGIVGDGCGECPACHLRKRGLEDYLQNKAEVMASLDKATETGKPQT.

13-23 (FSGGQDSTTCL) contributes to the ATP binding site. Zn(2+) is bound by residues C192, C201, C204, and C207.

The protein belongs to the QueC family. Zn(2+) serves as cofactor.

It catalyses the reaction 7-carboxy-7-deazaguanine + NH4(+) + ATP = 7-cyano-7-deazaguanine + ADP + phosphate + H2O + H(+). Its pathway is purine metabolism; 7-cyano-7-deazaguanine biosynthesis. Its function is as follows. Catalyzes the ATP-dependent conversion of 7-carboxy-7-deazaguanine (CDG) to 7-cyano-7-deazaguanine (preQ(0)). The protein is 7-cyano-7-deazaguanine synthase of Shewanella sp. (strain MR-4).